Here is a 521-residue protein sequence, read N- to C-terminus: 2-isopropylmalate synthase (521 aa).

The Pyruvate carboxyltransferase domain occupies 5-267 (VIIFDTTLRD…HTNIKHQEIH (263 aa)). Residues D14, H202, H204, and N238 each coordinate Mn(2+). The segment at 392–521 (KLNYLSVQSG…FAQKTVMETL (130 aa)) is regulatory domain.

It belongs to the alpha-IPM synthase/homocitrate synthase family. LeuA type 1 subfamily. In terms of assembly, homodimer. It depends on Mn(2+) as a cofactor.

The protein localises to the cytoplasm. The enzyme catalyses 3-methyl-2-oxobutanoate + acetyl-CoA + H2O = (2S)-2-isopropylmalate + CoA + H(+). It functions in the pathway amino-acid biosynthesis; L-leucine biosynthesis; L-leucine from 3-methyl-2-oxobutanoate: step 1/4. Functionally, catalyzes the condensation of the acetyl group of acetyl-CoA with 3-methyl-2-oxobutanoate (2-ketoisovalerate) to form 3-carboxy-3-hydroxy-4-methylpentanoate (2-isopropylmalate). The protein is 2-isopropylmalate synthase of Tolumonas auensis (strain DSM 9187 / NBRC 110442 / TA 4).